The chain runs to 206 residues: Transcription factor BTF3 (206 aa).

The interval 1–42 (MRRTGAPAQADSRGRGRARGGCPGGEATLSQPPPRGGTRGQE) is disordered. Residue Arg19 is modified to Omega-N-methylarginine. A Phosphoserine modification is found at Ser30. Lys46 and Lys54 each carry N6-methyllysine. The region spanning 82 to 147 (TADDKKLQFS…AETKQLTEML (66 aa)) is the NAC-A/B domain. At Thr160 the chain carries Phosphothreonine. The segment at 170-206 (PKQSVDGKAPLATGEDDDDEVPDLVENFDEASKNEAN) is disordered. A Phosphoserine modification is found at Ser173. A compositionally biased stretch (acidic residues) spans 183 to 198 (GEDDDDEVPDLVENFD).

This sequence belongs to the NAC-beta family. In terms of assembly, part of the nascent polypeptide-associated complex (NAC), which is a heterodimer of NACA and BTF3 (via NAC-A/B domains). NAC associates with ribosomes through the BTF3/NACB subunit. Both subunits can contact nascent polypeptide chains.

The protein localises to the cytoplasm. It localises to the nucleus. Its function is as follows. When associated with NACA, prevents inappropriate targeting of non-secretory polypeptides to the endoplasmic reticulum (ER). Binds to nascent polypeptide chains as they emerge from the ribosome and blocks their interaction with the signal recognition particle (SRP), which normally targets nascent secretory peptides to the ER. BTF3 is also a general transcription factor that can form a stable complex with RNA polymerase II. Required for the initiation of transcription. In Homo sapiens (Human), this protein is Transcription factor BTF3 (BTF3).